The chain runs to 463 residues: ATP-dependent protease ATPase subunit HslU (463 aa).

Residues V21, 63–68, D276, E341, and R413 each bind ATP; that span reads GVGKTE.

This sequence belongs to the ClpX chaperone family. HslU subfamily. In terms of assembly, a double ring-shaped homohexamer of HslV is capped on each side by a ring-shaped HslU homohexamer. The assembly of the HslU/HslV complex is dependent on binding of ATP.

The protein resides in the cytoplasm. Its function is as follows. ATPase subunit of a proteasome-like degradation complex; this subunit has chaperone activity. The binding of ATP and its subsequent hydrolysis by HslU are essential for unfolding of protein substrates subsequently hydrolyzed by HslV. HslU recognizes the N-terminal part of its protein substrates and unfolds these before they are guided to HslV for hydrolysis. The polypeptide is ATP-dependent protease ATPase subunit HslU (Thermotoga petrophila (strain ATCC BAA-488 / DSM 13995 / JCM 10881 / RKU-1)).